The chain runs to 656 residues: Receptor-type tyrosine-protein phosphatase R (656 aa).

Positions 1–23 (MRRAVGFPALCLLLNLHAAGCFS) are cleaved as a signal peptide. Residue serine 23 is glycosylated (O-linked (Xyl...) (chondroitin sulfate) serine). Over 24–226 (RNNDHFLAIR…EADKIWSKEG (203 aa)) the chain is Extracellular. A glycan (N-linked (GlcNAc...) asparagine) is linked at asparagine 128. A helical membrane pass occupies residues 227 to 247 (FYAVVIFLSIFIIIVTCLMII). Topologically, residues 248–656 (YRLKERLQLS…ESRLSPETVE (409 aa)) are cytoplasmic. The disordered stretch occupies residues 269 to 289 (HLSPIARQQAQSEAKTTHSMV). At serine 271 the chain carries Phosphoserine. Over residues 274–289 (ARQQAQSEAKTTHSMV) the composition is skewed to polar residues. Serine 338 is subject to Phosphoserine; by PKA. The region spanning 392–646 (LQSEFMEIPM…EFVHHALCLF (255 aa)) is the Tyrosine-protein phosphatase domain. Substrate is bound by residues aspartate 553, 587 to 593 (CSAGIGR), and glutamine 631. Residue cysteine 587 is the Phosphocysteine intermediate of the active site.

The protein belongs to the protein-tyrosine phosphatase family. Receptor class 7 subfamily. As to quaternary structure, interacts with MAPKs. In terms of tissue distribution, expressed in the heart, brain, spleen, lung, liver, skeletal muscle, kidney and testis. Isoform alpha is expressed throughout the granular layer of the cerebellar but not within the Purkinje cells, also in the villi of the ileum and jejunum and both the villi and crypts of the duodenum. Isoform beta is expressed only in the Purkinje cells. Isoform gamma is expressed throughout the brain, the villi and crypts of the duodenum, jejunum and ileum and expressed at low levels in the proximal colon.

Its subcellular location is the cell membrane. The protein resides in the cytoplasm. It catalyses the reaction O-phospho-L-tyrosyl-[protein] + H2O = L-tyrosyl-[protein] + phosphate. In terms of biological role, sequesters mitogen-activated protein kinases (MAPKs) such as MAPK1, MAPK3 and MAPK14 in the cytoplasm in an inactive form. The MAPKs bind to a dephosphorylated kinase interacting motif, phosphorylation of which by the protein kinase A complex releases the MAPKs for activation and translocation into the nucleus. Isoform gamma may have a role in patterning and cellular proliferation of skeletal elements in the precartilaginous/cartilaginous skeleton. The protein is Receptor-type tyrosine-protein phosphatase R (Ptprr) of Mus musculus (Mouse).